Consider the following 96-residue polypeptide: Co-chaperonin GroES (96 aa).

Belongs to the GroES chaperonin family. In terms of assembly, heptamer of 7 subunits arranged in a ring. Interacts with the chaperonin GroEL.

Its subcellular location is the cytoplasm. Together with the chaperonin GroEL, plays an essential role in assisting protein folding. The GroEL-GroES system forms a nano-cage that allows encapsulation of the non-native substrate proteins and provides a physical environment optimized to promote and accelerate protein folding. GroES binds to the apical surface of the GroEL ring, thereby capping the opening of the GroEL channel. The polypeptide is Co-chaperonin GroES (Alteromonas mediterranea (strain DSM 17117 / CIP 110805 / LMG 28347 / Deep ecotype)).